The chain runs to 478 residues: Isoeugenol monooxygenase (478 aa).

4 residues coordinate Fe cation: His167, His218, His282, and His471.

It belongs to the carotenoid oxygenase family. Monomer. Requires Fe(2+) as cofactor.

It carries out the reaction (E)-isoeugenol + O2 = vanillin + acetaldehyde. Inhibited by HgCl(2), AgNO(3), CuCl(2), phenylhydrazine, 8-hydroxyquinoline, R-cycloserine and p-chloromercuribenzoic acid. Its function is as follows. Involved in isoeugenol degradation. Catalyzes the oxidative cleavage of the side chain double-bond of isoeugenol to form vanillin and acetaldehyde. The chain is Isoeugenol monooxygenase from Pseudomonas putida (Arthrobacter siderocapsulatus).